The sequence spans 964 residues: MASGKVEKMASIDAQLRLLAPKKVSEDDKLVEYDALLLDRFLDILESLHGSGIRETVQELYEHAAEYERTHDTKKLEELGNLITSLDAGDSIVIAKSFSQMLNLANLAEEVQLAYRRRIKKTKKGDFADESSAITESDFEETLRRLVDLKKSPEEIFATLKNQTVDLVLTAHPTQSVRRSLLQKHGRIRDCLSQLYAKDISPDDKQELDEALQRAIQAAFRTDEIRRVQPTPQDEMRMGMSYFHETIWKGVPKFLRRVDTALKNIGINERVPYNVPLIQFSSWMGGDRDGNPRVTPEVTRDVVLLARMMAANMYFTQITDLMFELSMWRCNDEVRARAQELHSQSKSDAKHYIEFWKQIPLSEPYRVILGDVRDKLYNTREHAHKLLANGSSDVPEESTFTHIDQFLEPLELCYKSLCASGDQPIADGSLLDFMRQVSTFGLSLVKLDIRQESDRHTEVMDAITTHLGIGSYRSWSEEKRQEWLLSELRGKRPLFGSDLPMSYEVADAIGTFRVLAELPNDSFGAYIISMATAPSDVLAVELLQRECGIKKPLRVVPLFEKLADLQSAAASMTRLFSIDWYKNRINGTQEVMIGYSDSGKDAGRLSAAWQLYKVQEQLIQVAKEYGVKLTMFHGRGGTVGRGGGPTHLALLSQPPDTIHGSLRVTIQGEVIEQSFGEEHLCFRTLERYTAATLEHGIDPPTSPKPEWRALMDEMAVITTKEYRSVVLQEPRFVEYFRSATPELEYGRMNIGSRPAKRKPGGGIETLRAIPWIFSWTQTRFHLPVWLGCGAAFKHVIEKDIKNLAMLKDMYNQWSFFRVTIDLLEMVFAKGDPGIAALYDKLLVKDELKPFGENLRKSYLEAQKFLLEIAGHKDPLDADPYLKQILRLRDPYTTTLNVFQVYTLKRIRDPSFHVTVRPHLSKEMDANSLAADLVKLNPTSEYPPGLEDTLILTMKGIAAGMQNTG.

Residue Ser-11 is modified to Phosphoserine. Catalysis depends on residues His-172 and Lys-600.

Belongs to the PEPCase type 1 family. In terms of assembly, homotetramer. The cofactor is Mg(2+).

The protein resides in the cytoplasm. The enzyme catalyses oxaloacetate + phosphate = phosphoenolpyruvate + hydrogencarbonate. The protein operates within photosynthesis; C4 acid pathway. Its activity is regulated as follows. By light-reversible phosphorylation. Through the carboxylation of phosphoenolpyruvate (PEP) it forms oxaloacetate, a four-carbon dicarboxylic acid source for the tricarboxylic acid cycle. The polypeptide is Phosphoenolpyruvate carboxylase (Amaranthus hypochondriacus (Prince-of-Wales feather)).